Consider the following 115-residue polypeptide: NADH-ubiquinone oxidoreductase chain 3 (115 aa).

3 helical membrane passes run 4–24 (LLAM…AFWL), 55–75 (FFLV…LLPI), and 87–107 (MMLT…YEWI).

The protein belongs to the complex I subunit 3 family. Core subunit of respiratory chain NADH dehydrogenase (Complex I) which is composed of 45 different subunits. Interacts with TMEM186. Interacts with TMEM242.

The protein localises to the mitochondrion inner membrane. The enzyme catalyses a ubiquinone + NADH + 5 H(+)(in) = a ubiquinol + NAD(+) + 4 H(+)(out). Core subunit of the mitochondrial membrane respiratory chain NADH dehydrogenase (Complex I) which catalyzes electron transfer from NADH through the respiratory chain, using ubiquinone as an electron acceptor. Essential for the catalytic activity of complex I. The chain is NADH-ubiquinone oxidoreductase chain 3 from Neotoma floridana (Eastern woodrat).